The sequence spans 211 residues: Arginine exporter protein ArgO (211 aa).

Transmembrane regions (helical) follow at residues 1-21 (MLSY…PLGP), 37-57 (LMIA…GIFG), 68-88 (LLAL…FGAL), 111-131 (IIAT…DTFV), 147-167 (WFAL…ALLA), and 186-206 (LVGL…IHHI).

Belongs to the LysE/ArgO transporter (TC 2.A.75) family.

It localises to the cell inner membrane. The catalysed reaction is L-arginine(in) = L-arginine(out). Involved in the export of arginine. Important to control the intracellular level of arginine and the correct balance between arginine and lysine. The chain is Arginine exporter protein ArgO from Enterobacter sp. (strain 638).